Here is a 490-residue protein sequence, read N- to C-terminus: Betaine aldehyde dehydrogenase (490 aa).

K(+) is bound by residues T26, I27, and D93. Position 150–152 (150–152 (GAW)) interacts with NAD(+). Residue K162 is the Charge relay system of the active site. Residue 176 to 179 (KPSE) participates in NAD(+) binding. V180 lines the K(+) pocket. 230–233 (GVAS) is a binding site for NAD(+). L246 is a binding site for K(+). E252 acts as the Proton acceptor in catalysis. NAD(+)-binding residues include G254, C286, and E387. The Nucleophile role is filled by C286. C286 carries the post-translational modification Cysteine sulfenic acid (-SOH). Positions 457 and 460 each coordinate K(+). Residue E464 is the Charge relay system of the active site.

The protein belongs to the aldehyde dehydrogenase family. In terms of assembly, dimer of dimers. The cofactor is K(+).

The enzyme catalyses betaine aldehyde + NAD(+) + H2O = glycine betaine + NADH + 2 H(+). Its pathway is amine and polyamine biosynthesis; betaine biosynthesis via choline pathway; betaine from betaine aldehyde: step 1/1. Involved in the biosynthesis of the osmoprotectant glycine betaine. Catalyzes the irreversible oxidation of betaine aldehyde to the corresponding acid. This chain is Betaine aldehyde dehydrogenase, found in Escherichia coli (strain K12 / DH10B).